Here is a 795-residue protein sequence, read N- to C-terminus: Glycerol-3-phosphate acyltransferase 2, mitochondrial (795 aa).

Residues 1 to 21 are disordered; it reads MATMLEGRCQTQPRSSPSGRE. At 1–305 the chain is on the cytoplasmic side; sequence MATMLEGRCQ…LGPRLSALGQ (305 aa). Residues 9–18 show a composition bias toward polar residues; that stretch reads CQTQPRSSPS. An acyltransferase region spans residues 180-331; sequence QLHKGQMKMV…DALLVPVAVT (152 aa). The HXXXXD motif signature appears at 205–210; that stretch reads HKTLLD. The chain crosses the membrane as a helical span at residues 306–332; sequence AWVGFVVQAVQVGIVPDALLVPVAVTY. Residues 333–449 lie on the Mitochondrial intermembrane side of the membrane; that stretch reads DLVPDAPCDI…QLLVRRLSCH (117 aa). A helical transmembrane segment spans residues 450–472; sequence VLSASVGSSAVMSTAIMATLLLF. Residues 473 to 795 lie on the Cytoplasmic side of the membrane; sequence KHQKLLGEFS…EQFIRQFICS (323 aa). The residue at position 656 (S656) is a Phosphoserine. T660 is subject to Phosphothreonine. Phosphoserine occurs at positions 662 and 664.

Belongs to the GPAT/DAPAT family. Interacts with PIWIL2.

Its subcellular location is the mitochondrion outer membrane. It carries out the reaction sn-glycerol 3-phosphate + an acyl-CoA = a 1-acyl-sn-glycero-3-phosphate + CoA. The catalysed reaction is a 1-acyl-sn-glycero-3-phosphate + an acyl-CoA = a 1,2-diacyl-sn-glycero-3-phosphate + CoA. It catalyses the reaction 1-(9Z-octadecenoyl)-sn-glycero-3-phosphate + (9Z)-octadecenoyl-CoA = 1,2-di-(9Z-octadecenoyl)-sn-glycero-3-phosphate + CoA. The enzyme catalyses 1-(9Z-octadecenoyl)-sn-glycero-3-phosphate + (5Z,8Z,11Z,14Z)-eicosatetraenoyl-CoA = 1-(9Z)-octadecenoyl-2-(5Z,8Z,11Z,14Z)-eicosatetraenoyl-sn-glycero-3-phosphate + CoA. It carries out the reaction (5Z,8Z,11Z,14Z)-eicosatetraenoyl-CoA + sn-glycerol 3-phosphate = 1-(5Z,8Z,11Z,14Z-eicosatetraenoyl)-sn-glycero-3-phosphate + CoA. Its pathway is phospholipid metabolism; CDP-diacylglycerol biosynthesis; CDP-diacylglycerol from sn-glycerol 3-phosphate: step 1/3. Its activity is regulated as follows. Inhibited by N-ethylmaleimide (NEM). Transfers an acyl-group from acyl-ACP to the sn-1 position of glycerol-3-phosphate producing a lysophosphatidic acid (LPA), an essential step for the triacylglycerol (TAG) and glycerophospholipids. In vitro also transfers an acyl-group from acyl-ACP to the LPA producing a phosphatidic acid (PA). Prefers arachidonoyl-CoA as the acyl donor. Required for primary processing step during piRNA biosynthesis. Molecular mechanisms by which it promotes piRNA biosynthesis are unclear and do not involve its acyltransferase activity. The protein is Glycerol-3-phosphate acyltransferase 2, mitochondrial of Homo sapiens (Human).